The primary structure comprises 359 residues: 4-galactosyl-N-acetylglucosaminide 3-alpha-L-fucosyltransferase 9 (359 aa).

Topologically, residues 1 to 11 (MTSASKGILRP) are cytoplasmic. A helical; Signal-anchor for type II membrane protein membrane pass occupies residues 12–32 (FLIVCIILGCFMACLLIYIKP). Residues 33–359 (TNSWIFSPME…VGNLEKWFWN (327 aa)) lie on the Lumenal side of the membrane. Asn62 carries N-linked (GlcNAc...) asparagine glycosylation. Residues 63-168 (ETTILIWVWP…RRDSDIQVPY (106 aa)) form an acceptor-binding region. A beta-D-galactosyl-(1-&gt;4)-N-acetyl-beta-D-glucosaminyl derivative is bound at residue Gln75. 3 cysteine pairs are disulfide-bonded: Cys82-Cys335, Cys91-Cys338, and Cys190-Cys238. An N-linked (GlcNAc...) asparagine glycan is attached at Asn101. Glu137 serves as a coordination point for a beta-D-galactosyl-(1-&gt;4)-N-acetyl-beta-D-glucosaminyl derivative. The active-site Nucleophile is Glu137. GDP-beta-L-fucose is bound at residue Glu137. An N-linked (GlcNAc...) asparagine glycan is attached at Asn153. Tyr168, Val192, Ser194, Asn195, Arg202, Val226, Tyr241, Asn246, Tyr252, Glu255, and Lys256 together coordinate GDP-beta-L-fucose. Residues 169 to 326 (GFLTVSTNPF…NWRKDFTVNL (158 aa)) are donor-binding. Positions 327–359 (PRFWESHACLACDHVKRHQEYKSVGNLEKWFWN) are acceptor-binding.

This sequence belongs to the glycosyltransferase 10 family. Homodimer. Post-translationally, N-glycosylated with complex-type N-glycans.

The protein resides in the golgi apparatus. The protein localises to the trans-Golgi network membrane. It is found in the golgi apparatus membrane. It carries out the reaction a beta-D-galactosyl-(1-&gt;4)-N-acetyl-beta-D-glucosaminyl derivative + GDP-beta-L-fucose = a beta-D-galactosyl-(1-&gt;4)-[alpha-L-fucosyl-(1-&gt;3)]-N-acetyl-beta-D-glucosaminyl derivative + GDP + H(+). The catalysed reaction is an alpha-Neu5Ac-(2-&gt;3)-beta-D-Gal-(1-&gt;4)-beta-D-GlcNAc-(1-&gt;3)-beta-D-Gal-(1-&gt;4)-beta-D-GlcNAc derivative + GDP-beta-L-fucose = an alpha-Neu5Ac-(2-&gt;3)-beta-D-Gal-(1-&gt;4)-beta-D-GlcNAc-(1-&gt;3)-beta-D-Gal-(1-&gt;4)-[alpha-L-Fuc-(1-&gt;3)]-beta-D-GlcNAc derivative + GDP + H(+). The enzyme catalyses alpha-N-glycoloylneuraminosyl-(2-&gt;3)-beta-D-galactosyl-(1-&gt;4)-N-acetyl-beta-D-glucosaminyl-(1-&gt;3)-beta-D-galactosyl-(1-&gt;4)-N-acetyl-beta-D-glucosaminyl-(1-&gt;3)-beta-D-galactosyl-(1-&gt;4)-beta-D-glucosyl-(1&lt;-&gt;1')-ceramide + GDP-beta-L-fucose = alpha-N-glycoloylneuraminosyl-(2-&gt;3)-beta-D-galactosyl-(1-&gt;4)-N-acetyl-beta-D-glucosaminyl-(1-&gt;3)-beta-D-galactosyl-(1-&gt;4)-[alpha-L-fucosyl-(1-&gt;3)]-N-acetyl-beta-D-glucosaminyl-(1-&gt;3)-beta-D-galactosyl-(1-&gt;4)-beta-D-glucosyl-(1&lt;-&gt;1')-ceramide + GDP + H(+). It catalyses the reaction alpha-D-galactosyl-(1-&gt;3)-beta-D-galactosyl-(1-&gt;4)-N-acetyl-beta-D-glucosaminyl-(1-&gt;3)-beta-D-galactosyl-(1-&gt;4)-beta-D-glucosyl-(1&lt;-&gt;1')-ceramide + GDP-beta-L-fucose = a neolactoside IV(3)-alpha-Gal,III(3)-alpha-Fuc-nLc4Cer + GDP + H(+). It carries out the reaction a neolactoside nLc4Cer + GDP-beta-L-fucose = a neolactoside III(3)-alpha-Fuc-nLc4Cer + GDP + H(+). The catalysed reaction is an N-acetyl-alpha-neuraminyl-(2-&gt;3)-beta-D-galactosyl-(1-&gt;4)-N-acetyl-beta-D-glucosaminyl derivative + GDP-beta-L-fucose = an alpha-Neu5Ac-(2-&gt;3)-beta-D-Gal-(1-&gt;4)-[alpha-L-Fuc-(1-&gt;3)]-beta-D-GlcNAc derivative + GDP + H(+). The enzyme catalyses beta-D-Gal-(1-&gt;4)-beta-D-GlcNAc-(1-&gt;3)-beta-D-Gal-(1-&gt;4)-D-Glc + GDP-beta-L-fucose = beta-D-Gal-(1-&gt;4)-[alpha-L-Fuc-(1-&gt;3)]-beta-D-GlcNAc-(1-&gt;3)-beta-D-Gal-(1-&gt;4)-D-Glc + GDP + H(+). It catalyses the reaction an alpha-L-Fuc-(1-&gt;2)-beta-D-Gal-(1-&gt;4)-beta-D-GlcNAc derivative + GDP-beta-L-fucose = an alpha-L-Fuc-(1-&gt;2)-beta-D-Gal-(1-&gt;4)-[alpha-L-Fuc-(1-&gt;3)]-beta-D-GlcNAc derivative + GDP + H(+). Its pathway is protein modification; protein glycosylation. The protein operates within glycolipid biosynthesis. Activated by Mn2+. Catalyzes alpha(1-&gt;3) linkage of fucosyl moiety transferred from GDP-beta-L-fucose to N-acetyl glucosamine (GlcNAc) within type 2 lactosamine (LacNAc, beta-D-Gal-(1-&gt;4)-beta-D-GlcNAc-) glycan attached to glycolipids and N- or O-linked glycoproteins. Fucosylates distal type 2 LacNAc and its fucosylated (H-type 2 LacNAc) and sialylated (sialyl-type 2 LacNAc) derivatives to form Lewis x (Lex) (CD15) and Lewis y (Ley) antigenic epitopes involved in cell adhesion and differentiation. Generates Lex epitopes in the brain, presumably playing a role in the maintenance of neuronal stemness and neurite outgrowth in progenitor neural cells. Fucosylates the internal type 2 LacNAc unit of the polylactosamine chain to form VIM-2 antigen that serves as recognition epitope for SELE. Can also modify milk oligosaccharides in particular type 2 tetrasaccharide LNnT. This Canis lupus familiaris (Dog) protein is 4-galactosyl-N-acetylglucosaminide 3-alpha-L-fucosyltransferase 9.